The sequence spans 334 residues: Aromatic O-demethylase, reductase subunit (334 aa).

Positions 1 to 91 (MTFAVSVGGR…DTEVRSTADA (91 aa)) constitute a 2Fe-2S ferredoxin-type domain. Residues cysteine 35, cysteine 40, cysteine 43, and cysteine 75 each coordinate [2Fe-2S] cluster. The 101-residue stretch at 98-198 (LRDLTATVLE…TGPLGDFHLP (101 aa)) folds into the FAD-binding FR-type domain. FAD is bound by residues 145–148 (RQYS), 162–164 (HVR), 170–172 (VAT), threonine 215, phenylalanine 330, and serine 334.

As to quaternary structure, monomer. Forms a heterodimer with GcoA. FAD is required as a cofactor. The cofactor is [2Fe-2S] cluster.

The catalysed reaction is 2 oxidized [cytochrome P450] + NADH = 2 reduced [cytochrome P450] + NAD(+) + H(+). Its pathway is aromatic compound metabolism. Functionally, part of a two-component P450 system that efficiently O-demethylates diverse aromatic substrates such as guaiacol and a wide variety of lignin-derived monomers. Is likely involved in lignin degradation, allowing Amycolatopsis sp. ATCC 39116 to catabolize plant biomass. GcoB transfers electrons from NADH to the cytochrome P450 subunit GcoA. Highly prefers NADH over NADPH as the electron donor. The sequence is that of Aromatic O-demethylase, reductase subunit from Amycolatopsis sp. (strain ATCC 39116 / 75iv2).